The primary structure comprises 364 residues: uncharacterized protein (364 aa).

3 helical membrane passes run 41–61, 298–318, and 329–349; these read NIFT…FFGL, VIYI…ITYM, and LLFY…SIII.

Its subcellular location is the membrane. This is an uncharacterized protein from Mycoplasma capricolum subsp. capricolum (strain California kid / ATCC 27343 / NCTC 10154).